The primary structure comprises 259 residues: Indole-3-glycerol phosphate synthase (259 aa).

It belongs to the TrpC family.

The catalysed reaction is 1-(2-carboxyphenylamino)-1-deoxy-D-ribulose 5-phosphate + H(+) = (1S,2R)-1-C-(indol-3-yl)glycerol 3-phosphate + CO2 + H2O. The protein operates within amino-acid biosynthesis; L-tryptophan biosynthesis; L-tryptophan from chorismate: step 4/5. This chain is Indole-3-glycerol phosphate synthase, found in Dehalococcoides mccartyi (strain CBDB1).